Consider the following 128-residue polypeptide: Large ribosomal subunit protein bL12 (128 aa).

Belongs to the bacterial ribosomal protein bL12 family. As to quaternary structure, homodimer. Part of the ribosomal stalk of the 50S ribosomal subunit. Forms a multimeric L10(L12)X complex, where L10 forms an elongated spine to which 2 to 4 L12 dimers bind in a sequential fashion. Binds GTP-bound translation factors.

In terms of biological role, forms part of the ribosomal stalk which helps the ribosome interact with GTP-bound translation factors. Is thus essential for accurate translation. In Corynebacterium efficiens (strain DSM 44549 / YS-314 / AJ 12310 / JCM 11189 / NBRC 100395), this protein is Large ribosomal subunit protein bL12.